Consider the following 808-residue polypeptide: Protein tortoise (808 aa).

The stretch at 43 to 78 forms a coiled coil; the sequence is KDRKELYSLNNDSIKKKLNQLKDETNQLLKERGEEL. Positions 152 to 171 are disordered; sequence LTSGGANKKKSPFLEDNNNK. Residues 694–733 are a coiled coil; sequence EDLDFQIEELELMIKNKKILEREIKAHNEKISKIIKDSRD.

It localises to the mitochondrion. Functionally, required for efficient chemotaxis. The chain is Protein tortoise (torA) from Dictyostelium discoideum (Social amoeba).